A 310-amino-acid polypeptide reads, in one-letter code: 4-hydroxythreonine-4-phosphate dehydrogenase (310 aa).

Substrate is bound by residues His126 and Thr127. A divalent metal cation-binding residues include His156, His195, and His251. The substrate site is built by Lys259, Asn268, and Arg277.

It belongs to the PdxA family. Homodimer. Requires Zn(2+) as cofactor. It depends on Mg(2+) as a cofactor. Co(2+) is required as a cofactor.

Its subcellular location is the cytoplasm. The catalysed reaction is 4-(phosphooxy)-L-threonine + NAD(+) = 3-amino-2-oxopropyl phosphate + CO2 + NADH. Its pathway is cofactor biosynthesis; pyridoxine 5'-phosphate biosynthesis; pyridoxine 5'-phosphate from D-erythrose 4-phosphate: step 4/5. Functionally, catalyzes the NAD(P)-dependent oxidation of 4-(phosphooxy)-L-threonine (HTP) into 2-amino-3-oxo-4-(phosphooxy)butyric acid which spontaneously decarboxylates to form 3-amino-2-oxopropyl phosphate (AHAP). The protein is 4-hydroxythreonine-4-phosphate dehydrogenase of Helicobacter acinonychis (strain Sheeba).